A 271-amino-acid chain; its full sequence is Peroxisomal biogenesis factor 2 (271 aa).

Residues 1-2 (MS) lie on the Peroxisomal matrix side of the membrane. The helical transmembrane segment at 3–29 (RVAQLDSIALDKELYGQFWSEFNAAFN) threads the bilayer. Residues 30-33 (TSEH) lie on the Cytoplasmic side of the membrane. The chain crosses the membrane as a helical span at residues 34–60 (KEEWELALNTVVFMCATRFLPHYGSSC). Topologically, residues 61–77 (TYGSALSGVVFQCRKRT) are peroxisomal matrix. A helical transmembrane segment spans residues 78 to 97 (LYVVTVLAGYVWKKITHIIF). Residues 98–101 (NGPH) are Cytoplasmic-facing. The chain crosses the membrane as a helical span at residues 102–133 (CGNQMMWLKLYKWVNLLYHGCDVTNFLRFLAA). At 134–175 (EGPNARAFLSPLYRAFNVHSTRLIRDGSAIASEFYSNSVFAG) the chain is on the peroxisomal matrix side. A helical membrane pass occupies residues 176–197 (LEYQNRQLLWNALLELFSNTLL). Over 198–271 (TKRGLLTFVK…SGRLTASPVY (74 aa)) the chain is Cytoplasmic. Zn(2+)-binding residues include Cys222, Cys225, Cys237, Cys238, Cys243, Cys246, Cys256, and Cys259. The segment at 222–259 (CPRCGGFPTNPYQIACCRANYCYVCVVKALEWSMCDAC) adopts an RING-type zinc-finger fold.

This sequence belongs to the pex2/pex10/pex12 family. In terms of assembly, component of the PEX2-PEX10-PEX12 retrotranslocation channel, composed of PEX2, PEX10 and PEX12.

It is found in the peroxisome membrane. The enzyme catalyses [E2 ubiquitin-conjugating enzyme]-S-ubiquitinyl-L-cysteine + [acceptor protein]-L-cysteine = [E2 ubiquitin-conjugating enzyme]-L-cysteine + [acceptor protein]-S-ubiquitinyl-L-cysteine.. It participates in protein modification; protein ubiquitination. In terms of biological role, E3 ubiquitin-protein ligase component of a retrotranslocation channel required for peroxisome organization by mediating export of the PEX5 receptor from peroxisomes to the cytosol, thereby promoting PEX5 recycling. The retrotranslocation channel is composed of PEX2, PEX10 and PEX12; each subunit contributing transmembrane segments that coassemble into an open channel that specifically allows the passage of PEX5 through the peroxisomal membrane. PEX2 also regulates peroxisome organization by acting as a E3 ubiquitin-protein ligase. PEX2 ubiquitinates PEX5 during its passage through the retrotranslocation channel: catalyzes monoubiquitination of PEX5 at 'Cys-6', a modification that acts as a signal for PEX5 extraction into the cytosol. The chain is Peroxisomal biogenesis factor 2 from Saccharomyces cerevisiae (strain ATCC 204508 / S288c) (Baker's yeast).